Reading from the N-terminus, the 319-residue chain is L-tryptophan isonitrile synthase AmbI1 (319 aa).

This sequence belongs to the isocyanide synthase family.

It catalyses the reaction D-ribulose 5-phosphate + L-tryptophan = (2S)-3-(1H-indol-3-yl)-2-isocyanopropanoate + hydroxyacetone + formaldehyde + phosphate + H2O + H(+). Its function is as follows. Involved in the biosynthesis of ambiguines, a family of hapalindole-type alkaloids. Responsible for the synthesis of the isonitrile group on tryptophan using ribulose 5-phosphate as the source of the carbon atom. In Fischerella ambigua (strain UTEX 1903), this protein is L-tryptophan isonitrile synthase AmbI1.